We begin with the raw amino-acid sequence, 326 residues long: Transposase InsH for insertion sequence element IS5H (326 aa).

The protein belongs to the transposase 11 family.

Involved in the transposition of the insertion sequence IS5. The chain is Transposase InsH for insertion sequence element IS5H (insH6) from Escherichia coli (strain K12).